Here is a 1421-residue protein sequence, read N- to C-terminus: Envelopment polyprotein (1421 aa).

The N-terminal stretch at 1 to 20 (MEGSYWWLSLLALLAWGANG) is a signal peptide. Topologically, residues 21–479 (ESTSPAETSP…CRMSHRPRTC (459 aa)) are lumenal. A compositionally biased stretch (low complexity) spans 22-31 (STSPAETSPA). The tract at residues 22–42 (STSPAETSPAPTTPNPPVVNP) is disordered. Asn97 and Asn346 each carry an N-linked (GlcNAc...) asparagine; by host glycan. The helical transmembrane segment at 480-500 (LALFIWLGAGYGITCIAGYMV) threads the bilayer. At 501–610 (YYAILALSML…KLGTLLKRLS (110 aa)) the chain is on the cytoplasmic side. Residues 611 to 631 (WVTVFLCLFLTAIAPVQGQVT) form a helical membrane-spanning segment. At 632-643 (TSPVLPSNQSTE) the chain is on the lumenal side. N-linked (GlcNAc...) asparagine; by host glycosylation is present at Asn639. The chain crosses the membrane as a helical span at residues 644–664 (CTLLPPPVFLIFSAVLMSKTL). At 665 to 708 (KRMGPVNKVGAAGHSARRTNSPKNLYKSKQIANTKSGPREPRRR) the chain is on the cytoplasmic side. The helical transmembrane segment at 709–729 (VVVKALLILTASSALQSIHLA) threads the bilayer. The propeptide occupies 722–776 (ALQSIHLAQAFDSGSLPEGAWEEEMQLVQGCNQECSLEEDECSCPDGQSMTRKLL). Residues 730-1330 (QAFDSGSLPE…GSFFRNYLGS (601 aa)) lie on the Lumenal side of the membrane. 2 disulfide bridges follow: Cys901–Cys1096 and Cys929–Cys934. Asn1081 and Asn1299 each carry an N-linked (GlcNAc...) asparagine; by host glycan. Residues 1331-1351 (ITLGIVLTLLPVAVVLLFFCY) traverse the membrane as a helical segment. Topologically, residues 1352–1421 (GDKLFKLCSC…GKGKNYKELV (70 aa)) are cytoplasmic.

The protein belongs to the nairovirus envelope glycoprotein family. Heterodimer with glycoprotein C; in prefusion state. In terms of assembly, heterodimer with glycoprotein N; in prefusion state. Homotrimeric; in postfusion state. Specific enzymatic cleavage by host MBTPS1/S1P/SKI-1 endopeptidase yield glycoprotein N. Specific enzymatic cleavages by host furin-like protease and MBTPS1/S1P endopeptidase yield GP38. Post-translationally, glycosylated.

It localises to the host endoplasmic reticulum membrane. The protein resides in the virion membrane. It is found in the host Golgi apparatus membrane. In terms of biological role, glycoprotein N and glycoprotein C interact with each other and are present at the surface of the virion. Glycoprotein N probably locks the Gn-Gc complex in a prefusion state. Glycoprotein N and glycoprotein C are able to attach the virion to host cell receptors. This attachment induces virion internalization predominantly through clathrin-dependent endocytosis. Functionally, glycoprotein C and glycoprotein N interact with each other and are present at the surface of the virion. The spikes at the surface of the virion are formed by an N-terminal extension of glycoprotein C. Glycoprotein N and glycoprotein C are able to attach the virion to host cell receptors. This attachment induces virion internalization predominantly through clathrin-dependent endocytosis. Class II fusion protein that promotes fusion of viral membrane with host endosomal membrane after endocytosis of the virion. Exposure to potassium is necessary for the conformational change leading to fusion. The polypeptide is Envelopment polyprotein (GP) (Ixodes).